A 646-amino-acid polypeptide reads, in one-letter code: Lamin-1 (646 aa).

The head stretch occupies residues 1–85 (MAEKAGEAGV…GSRATSPTSF (85 aa)). The tract at residues 1-94 (MAEKAGEAGV…FSRAQEKEEL (94 aa)) is disordered. Polar residues-rich tracts occupy residues 48-67 (ATPSSQQSQKSVRTESSMSL) and 75-87 (QGSRATSPTSFSR). The coil 1A stretch occupies residues 86–126 (SRAQEKEELQNLNDRLAKILNKLNDSEEENRTLKIRLTTVQ). Positions 90–446 (EKEELQNLND…KLLSDEEIRL (357 aa)) constitute an IF rod domain. Residues 127–137 (QETSADLNDQI) are linker 1. Residues 138-281 (GKYRDELERA…SKLQRQSLSV (144 aa)) are coil 1B. Over residues 281–301 (VTTVDHHSAQSTSRRSGSDFS) the composition is skewed to polar residues. Positions 281–304 (VTTVDHHSAQSTSRRSGSDFSASV) are disordered. The linker 2 stretch occupies residues 282 to 299 (TTVDHHSAQSTSRRSGSD). The coil 2 stretch occupies residues 300 to 439 (FSASVEDMRS…TELEMYNKLL (140 aa)). Positions 440 to 646 (SDEEIRLGIT…GKGILGFFGL (207 aa)) are tail. Residues 457 to 471 (VRHGAKKRKLTETFY) carry the Nuclear localization signal motif. The segment covering 476 to 487 (GSRSSAGSRSAG) has biased composition (low complexity). Positions 476–513 (GSRSSAGSRSAGHNSTPVTKSQVTRTTVKTSENKSKAS) are disordered. Over residues 488-505 (HNSTPVTKSQVTRTTVKT) the composition is skewed to polar residues. The LTD domain maps to 504 to 618 (KTSENKSKAS…NQMATYEVSA (115 aa)).

It belongs to the intermediate filament family.

The protein resides in the nucleus. In terms of biological role, intermediate filament (IF) protein, component of the nuclear lamina, a fibrous layer on the nucleoplasmic side of the inner nuclear membrane, which is thought to provide a framework for the nuclear envelope. In Hypsibius exemplaris (Freshwater tardigrade), this protein is Lamin-1.